The following is a 328-amino-acid chain: Ketol-acid reductoisomerase (NADP(+)) (328 aa).

The KARI N-terminal Rossmann domain maps to 2–182 (AKIYTDREAS…GATRAGVIET (181 aa)). Residues 25–28 (YGIQ), Arg-48, Ser-53, and 83–86 (DMEQ) contribute to the NADP(+) site. Residue His-108 is part of the active site. Gly-134 is a binding site for NADP(+). A KARI C-terminal knotted domain is found at 183-328 (TFAEETETDL…EEMRKLLFGP (146 aa)). Residues Asp-191, Glu-195, Glu-227, and Glu-231 each contribute to the Mg(2+) site. Residue Ser-252 coordinates substrate.

Belongs to the ketol-acid reductoisomerase family. It depends on Mg(2+) as a cofactor.

It carries out the reaction (2R)-2,3-dihydroxy-3-methylbutanoate + NADP(+) = (2S)-2-acetolactate + NADPH + H(+). The enzyme catalyses (2R,3R)-2,3-dihydroxy-3-methylpentanoate + NADP(+) = (S)-2-ethyl-2-hydroxy-3-oxobutanoate + NADPH + H(+). It functions in the pathway amino-acid biosynthesis; L-isoleucine biosynthesis; L-isoleucine from 2-oxobutanoate: step 2/4. The protein operates within amino-acid biosynthesis; L-valine biosynthesis; L-valine from pyruvate: step 2/4. Involved in the biosynthesis of branched-chain amino acids (BCAA). Catalyzes an alkyl-migration followed by a ketol-acid reduction of (S)-2-acetolactate (S2AL) to yield (R)-2,3-dihydroxy-isovalerate. In the isomerase reaction, S2AL is rearranged via a Mg-dependent methyl migration to produce 3-hydroxy-3-methyl-2-ketobutyrate (HMKB). In the reductase reaction, this 2-ketoacid undergoes a metal-dependent reduction by NADPH to yield (R)-2,3-dihydroxy-isovalerate. The sequence is that of Ketol-acid reductoisomerase (NADP(+)) from Pyrobaculum aerophilum (strain ATCC 51768 / DSM 7523 / JCM 9630 / CIP 104966 / NBRC 100827 / IM2).